The sequence spans 132 residues: Interleukin-4 (132 aa).

The first 24 residues, 1–24 (MGLTSQLIPTLVCLLALTSTFVHG), serve as a signal peptide directing secretion. Asn-28, Asn-45, Asn-62, and Asn-101 each carry an N-linked (GlcNAc...) asparagine glycan. Intrachain disulfides connect Cys-48/Cys-84 and Cys-70/Cys-104.

This sequence belongs to the IL-4/IL-13 family.

It is found in the secreted. Functionally, participates in at least several B-cell activation processes as well as of other cell types. It is a costimulator of DNA-synthesis. It induces the expression of class II MHC molecules on resting B-cells. It enhances both secretion and cell surface expression of IgE and IgG1. It also regulates the expression of the low affinity Fc receptor for IgE (CD23) on both lymphocytes and monocytes. Positively regulates IL31RA expression in macrophages. Stimulates autophagy in dendritic cells by interfering with mTORC1 signaling and through the induction of RUFY4. This is Interleukin-4 (IL4) from Ailuropoda melanoleuca (Giant panda).